The primary structure comprises 83 residues: Normal mucosa of esophagus-specific gene 1 protein (83 aa).

Belongs to the complex I NDUFA4 subunit family. As to expression, strongly expressed in vertebrae, brain, intestine and stomach.

Its subcellular location is the nucleus. This is Normal mucosa of esophagus-specific gene 1 protein (Nmes1) from Mus musculus (Mouse).